We begin with the raw amino-acid sequence, 276 residues long: Type II pantothenate kinase (276 aa).

8-15 (DAGGTLTK) provides a ligand contact to ATP. Catalysis depends on glutamate 76, which acts as the Proton acceptor. ATP-binding positions include threonine 105, 127 to 131 (GGTIM), phenylalanine 143, and serine 230.

This sequence belongs to the type II pantothenate kinase family. As to quaternary structure, homodimer.

The protein localises to the cytoplasm. It catalyses the reaction (R)-pantothenate + ATP = (R)-4'-phosphopantothenate + ADP + H(+). Its pathway is cofactor biosynthesis; coenzyme A biosynthesis; CoA from (R)-pantothenate: step 1/5. Catalyzes the phosphorylation of pantothenate (Pan), the first step in CoA biosynthesis. The sequence is that of Type II pantothenate kinase from Bacillus thuringiensis subsp. konkukian (strain 97-27).